Here is a 660-residue protein sequence, read N- to C-terminus: Peroxisomal acyl-coenzyme A oxidase 1 (660 aa).

Serine 26 bears the Phosphoserine mark. An N6-succinyllysine mark is found at lysine 89 and lysine 90. FAD contacts are provided by threonine 139 and glycine 178. At lysine 216 the chain carries N6-acetyllysine. An N6-succinyllysine modification is found at lysine 241. Lysine 255, lysine 267, and lysine 272 each carry N6-acetyllysine. Lysine 349 is subject to N6-succinyllysine. The Proton acceptor role is filled by glutamate 421. N6-acetyllysine; alternate occurs at positions 437 and 446. N6-succinyllysine; alternate occurs at positions 437 and 446. N6-acetyllysine is present on lysine 500. Lysine 512 is modified (N6-acetyllysine; alternate). N6-succinyllysine; alternate is present on lysine 512. Lysine 542 is subject to N6-succinyllysine. At lysine 637 the chain carries N6-acetyllysine; alternate. Lysine 637 bears the N6-succinyllysine; alternate mark. Position 643 is an N6-succinyllysine (lysine 643). Serine 649 is modified (phosphoserine). Lysine 651 carries the post-translational modification N6-acetyllysine. Residue lysine 654 is modified to N6-succinyllysine. The Microbody targeting signal motif lies at 658–660 (SKL).

It belongs to the acyl-CoA oxidase family. As to quaternary structure, homodimer. Interacts with LONP2. FAD serves as cofactor.

Its subcellular location is the peroxisome. It catalyses the reaction a 2,3-saturated acyl-CoA + O2 = a (2E)-enoyl-CoA + H2O2. The catalysed reaction is hexadecanoyl-CoA + O2 = (2E)-hexadecenoyl-CoA + H2O2. The enzyme catalyses dodecanoyl-CoA + O2 = (2E)-dodecenoyl-CoA + H2O2. It carries out the reaction octanoyl-CoA + O2 = (2E)-octenoyl-CoA + H2O2. It catalyses the reaction decanoyl-CoA + O2 = (2E)-decenoyl-CoA + H2O2. The catalysed reaction is tetradecanoyl-CoA + O2 = (2E)-tetradecenoyl-CoA + H2O2. The enzyme catalyses hexadecanedioyl-CoA + O2 = (2E)-hexadecenedioyl-CoA + H2O2. It carries out the reaction tetracosanoyl-CoA + O2 = (2E)-tetracosenoyl-CoA + H2O2. It catalyses the reaction glutaryl-CoA + O2 = (2E)-glutaconyl-CoA + H2O2. The catalysed reaction is hexanoyl-CoA + O2 = (2E)-hexenoyl-CoA + H2O2. The enzyme catalyses octadecanoyl-CoA + O2 = (2E)-octadecenoyl-CoA + H2O2. It carries out the reaction (5Z,8Z,11Z,14Z,17Z)-eicosapentaenoyl-CoA + O2 = (2E,5Z,8Z,11Z,14Z,17Z)-icosahexaenoyl-CoA + H2O2. It catalyses the reaction (6Z,9Z,12Z,15Z,18Z,21Z)-tetracosahexaenoyl-CoA + O2 = (2E,6Z,9Z,12Z,15Z,18Z,21Z)-tetracosaheptaenoyl-CoA + H2O2. Its pathway is lipid metabolism; peroxisomal fatty acid beta-oxidation. Functionally, involved in the initial and rate-limiting step of peroxisomal beta-oxidation of straight-chain saturated and unsaturated very-long-chain fatty acids. Catalyzes the desaturation of fatty acyl-CoAs such as palmitoyl-CoA (hexadecanoyl-CoA) to 2-trans-enoyl-CoAs ((2E)-enoyl-CoAs) such as (2E)-hexadecenoyl-CoA, and donates electrons directly to molecular oxygen (O(2)), thereby producing hydrogen peroxide (H(2)O(2)). Shows highest activity against medium-chain fatty acyl-CoAs. Shows optimum activity with a chain length of 10 carbons (decanoyl-CoA) in vitro. Its function is as follows. Is active against a much broader range of substrates and shows activity towards long-chain acyl-CoAs. This Pongo abelii (Sumatran orangutan) protein is Peroxisomal acyl-coenzyme A oxidase 1.